The following is a 180-amino-acid chain: Large ribosomal subunit protein uL5 (180 aa).

Belongs to the universal ribosomal protein uL5 family. As to quaternary structure, part of the 50S ribosomal subunit; part of the 5S rRNA/L5/L18/L25 subcomplex. Contacts the 5S rRNA and the P site tRNA. Forms a bridge to the 30S subunit in the 70S ribosome.

This is one of the proteins that bind and probably mediate the attachment of the 5S RNA into the large ribosomal subunit, where it forms part of the central protuberance. In the 70S ribosome it contacts protein S13 of the 30S subunit (bridge B1b), connecting the 2 subunits; this bridge is implicated in subunit movement. Contacts the P site tRNA; the 5S rRNA and some of its associated proteins might help stabilize positioning of ribosome-bound tRNAs. In Polynucleobacter asymbioticus (strain DSM 18221 / CIP 109841 / QLW-P1DMWA-1) (Polynucleobacter necessarius subsp. asymbioticus), this protein is Large ribosomal subunit protein uL5.